Here is a 352-residue protein sequence, read N- to C-terminus: Putative [LysW]-L-2-aminoadipate/[LysW]-L-glutamate phosphate reductase (352 aa).

Residues 10–13 (SGFT) and 34–36 (SRK) each bind NADP(+). Cysteine 151 is an active-site residue. An NADP(+)-binding site is contributed by asparagine 319.

It belongs to the NAGSA dehydrogenase family. Type 1 subfamily. LysY sub-subfamily.

The protein localises to the cytoplasm. It catalyses the reaction [amino-group carrier protein]-C-terminal-N-(1-carboxy-5-oxopentan-1-yl)-L-glutamine + phosphate + NADP(+) = [amino-group carrier protein]-C-terminal-N-(1-carboxy-5-phosphooxy-5-oxopentan-1-yl)-L-glutamine + NADPH + H(+). The catalysed reaction is [amino-group carrier protein]-C-terminal-gamma-(L-glutamyl-5-semialdehyde)-L-glutamate + phosphate + NADP(+) = [amino-group carrier protein]-C-terminal-gamma-(5-phospho-L-glutamyl)-L-glutamate + NADPH + H(+). Its pathway is amino-acid biosynthesis; L-lysine biosynthesis via AAA pathway; L-lysine from L-alpha-aminoadipate (Thermus route): step 3/5. It participates in amino-acid biosynthesis; L-arginine biosynthesis. Its function is as follows. Involved in both the arginine and lysine biosynthetic pathways. The protein is Putative [LysW]-L-2-aminoadipate/[LysW]-L-glutamate phosphate reductase of Pyrobaculum neutrophilum (strain DSM 2338 / JCM 9278 / NBRC 100436 / V24Sta) (Thermoproteus neutrophilus).